Here is a 521-residue protein sequence, read N- to C-terminus: Glucose-1-phosphate adenylyltransferase small subunit, chloroplastic (521 aa).

The segment at 1–24 (MAASIGALKSSPSSHNCINERRND) is disordered. The transit peptide at 1-72 (MAASIGALKS…RSPLIVSPKA (72 aa)) directs the protein to the chloroplast.

Belongs to the bacterial/plant glucose-1-phosphate adenylyltransferase family. As to quaternary structure, heterotetramer.

Its subcellular location is the plastid. It localises to the chloroplast. The enzyme catalyses alpha-D-glucose 1-phosphate + ATP + H(+) = ADP-alpha-D-glucose + diphosphate. It functions in the pathway glycan biosynthesis; starch biosynthesis. Activated by 3'phosphoglycerate, inhibited by orthophosphate. Allosteric regulation. Its function is as follows. This protein plays a role in synthesis of starch. It catalyzes the synthesis of the activated glycosyl donor, ADP-glucose from Glc-1-P and ATP. The sequence is that of Glucose-1-phosphate adenylyltransferase small subunit, chloroplastic from Solanum lycopersicum (Tomato).